Reading from the N-terminus, the 1328-residue chain is Protein turtle homolog B (1328 aa).

The signal sequence occupies residues 1–20 (MIWYVATLIASVISTRGLVA). Residues 21 to 722 (QVAHGLREEP…DLTDDGLARP (702 aa)) lie on the Extracellular side of the membrane. 5 Ig-like domains span residues 30–115 (PEFV…ECKV), 139–226 (PTFT…LLVQ), 228–320 (PPFI…AYLT), 324–415 (PARV…ARLV), and 420–504 (PYFT…THLT). 2 disulfide bridges follow: Cys45–Cys113 and Cys161–Cys208. Residues Asn241 and Asn258 are each glycosylated (N-linked (GlcNAc...) asparagine). 3 disulfides stabilise this stretch: Cys250–Cys303, Cys346–Cys397, and Cys442–Cys488. 2 consecutive Fibronectin type-III domains span residues 512 to 604 (APGS…TLAF) and 614 to 708 (LVTP…STDI). Residue Asn624 is glycosylated (N-linked (GlcNAc...) asparagine). A helical membrane pass occupies residues 723-743 (VLAGIVATICFLAAAILFSTL). Residues 744 to 1328 (AACFVNKQRK…EPPTTLPTSG (585 aa)) are Cytoplasmic-facing. 3 disordered regions span residues 758–817 (RKKD…EKEL), 914–1040 (PMSS…PEPW), and 1107–1328 (SPGR…PTSG). 3 positions are modified to phosphoserine: Ser775, Ser783, and Ser794. Residues 990–1001 (SPLSSVMSSPPL) are compositionally biased toward low complexity. Polar residues-rich tracts occupy residues 1018–1033 (ENAS…TPTG), 1129–1141 (LVSQ…TSQG), and 1199–1214 (SRLS…SRTG). Arg1136 carries the omega-N-methylarginine modification. A phosphoserine mark is found at Ser1207 and Ser1215. Residues 1246–1273 (SFSRKSTPSSTGSPSQSSRSGSPSYRPT) are compositionally biased toward low complexity. 2 stretches are compositionally biased toward pro residues: residues 1284–1295 (PSPPPGPAPPAP) and 1318–1328 (PEPPTTLPTSG).

It belongs to the immunoglobulin superfamily. Turtle family. Found in a complex with MAGI2 and NLGN2, where it interacts with MAGI2 (via PDZ 5 and PDZ 6 domains). N-glycosylated and sialylated. Not significantly O-glycosylated. In terms of tissue distribution, detected primarily in brain, including cortex, hippocampus, cerebellum and striatum. Largely restricted to inhibitory GABAergic interneurons (at protein level).

The protein resides in the postsynaptic cell membrane. It localises to the postsynaptic density. Transmembrane protein which is abundantly expressed in interneurons, where it may regulate inhibitory synapse development. May mediate homophilic cell adhesion. The protein is Protein turtle homolog B of Rattus norvegicus (Rat).